The primary structure comprises 941 residues: Myosin heavy chain kinase D (941 aa).

Residues 8–48 (KLSKKIEKILEKNDYLKKKVEQLTKSVDNHEFKIQELLLLL) are a coiled coil. 3 stretches are compositionally biased toward low complexity: residues 57–70 (TTTT…NNST), 84–115 (TSTD…TTTS), and 124–206 (NSNN…PQLS). 2 disordered regions span residues 57-234 (TTTT…KEDS) and 276-310 (SSNN…QQQQ). Residues 289-317 (SILNDQQNQQQNQQQQNQQQQQEEINFIT) adopt a coiled-coil conformation. The 246-residue stretch at 337–582 (EYSANDDEWT…ICLQFGLPPI (246 aa)) folds into the Alpha-type protein kinase domain. 7 WD repeats span residues 635-674 (GHDE…DLSK), 683-720 (AHRR…TTTT), 741-780 (DHTA…CIKS), 783-820 (AHGK…CVYG), 824-861 (AHDA…PTTT), 864-902 (QHNM…EPIK), and 909-941 (AHRS…WKNK).

This sequence belongs to the protein kinase superfamily. Alpha-type protein kinase family. ALPK subfamily.

The catalysed reaction is L-threonyl-[myosin heavy-chain] + ATP = O-phospho-L-threonyl-[myosin heavy-chain] + ADP + H(+). Its function is as follows. Phosphorylates threonine. Not critical for regulating the assembly and disassembly of myosin II filament. In Dictyostelium discoideum (Social amoeba), this protein is Myosin heavy chain kinase D (mhkD).